The following is an 865-amino-acid chain: Serine/threonine-protein kinase greatwall (865 aa).

Met-1 carries the post-translational modification N-acetylmethionine. The 788-residue stretch at 34–821 (FTIVKPISRG…MRELKQHPLF (788 aa)) folds into the Protein kinase domain. Residues 40 to 48 (ISRGAFGKV) and Lys-61 each bind ATP. Asp-155 acts as the Proton acceptor in catalysis. Thr-206 and Thr-221 each carry phosphothreonine. A phosphoserine mark is found at Ser-362 and Ser-442. At Thr-508 the chain carries Phosphothreonine. Phosphoserine is present on residues Ser-545, Ser-619, Ser-644, and Ser-655. A Phosphothreonine modification is found at Thr-708. Ser-711 bears the Phosphoserine mark. A Phosphothreonine; by CDK1 modification is found at Thr-727. The AGC-kinase C-terminal domain maps to 822–865 (SEVDWENLQHQTMPFVPQPDDETDTSYFEARNNAQHLTISGFSL). Phosphoserine is present on residues Ser-861 and Ser-864.

This sequence belongs to the protein kinase superfamily. AGC Ser/Thr protein kinase family. Post-translationally, phosphorylation at Thr-727 by CDK1 during M phase activates its kinase activity. Maximum phosphorylation occurs in prometaphase.

Its subcellular location is the cytoplasm. It localises to the cytoskeleton. It is found in the microtubule organizing center. The protein resides in the centrosome. The protein localises to the nucleus. The catalysed reaction is L-seryl-[protein] + ATP = O-phospho-L-seryl-[protein] + ADP + H(+). It carries out the reaction L-threonyl-[protein] + ATP = O-phospho-L-threonyl-[protein] + ADP + H(+). Serine/threonine kinase that plays a key role in M phase by acting as a regulator of mitosis entry and maintenance. Acts by promoting the inactivation of protein phosphatase 2A (PP2A) during M phase: does not directly inhibit PP2A but acts by mediating phosphorylation and subsequent activation of ARPP19 and ENSA at 'Ser-62' and 'Ser-67', respectively. ARPP19 and ENSA are phosphatase inhibitors that specifically inhibit the PPP2R2D (PR55-delta) subunit of PP2A. Inactivation of PP2A during M phase is essential to keep cyclin-B1-CDK1 activity high. Following DNA damage, it is also involved in checkpoint recovery by being inhibited. The polypeptide is Serine/threonine-protein kinase greatwall (Mastl) (Mus musculus (Mouse)).